Here is a 283-residue protein sequence, read N- to C-terminus: S-adenosylmethionine mitochondrial carrier protein homolog (283 aa).

Solcar repeat units lie at residues 11 to 84, 93 to 178, and 187 to 275; these read LKFF…GKQF, DSPY…FKLQ, and STPF…TTRI. 6 helical membrane-spanning segments follow: residues 14-34, 55-75, 99-119, 152-172, 190-210, and 248-268; these read FHAL…LFPI, GIYK…ALFF, MAAA…VEIA, RGFG…FPLW, FSVA…TTPL, and FAGF…FFGF.

The protein belongs to the mitochondrial carrier (TC 2.A.29) family.

It is found in the mitochondrion inner membrane. Functionally, mitochondrial solute carriers shuttle metabolites, nucleotides, and cofactors through the mitochondrial inner membrane. May mediate the transport of S-adenosylmethionine (SAM) into the mitochondria. This Drosophila melanogaster (Fruit fly) protein is S-adenosylmethionine mitochondrial carrier protein homolog.